Consider the following 1002-residue polypeptide: Eukaryotic translation initiation factor 5B (1002 aa).

2 disordered regions span residues 1–172 (MAKK…GLAA) and 184–402 (EEQE…NKKD). The span at 13-23 (WDEEFEEDAAQ) shows a compositional bias: acidic residues. Positions 27–37 (ISATPTPNPES) are enriched in polar residues. Residues 47–57 (EASASAEGAEA) are compositionally biased toward low complexity. Composition is skewed to basic and acidic residues over residues 75–111 (KKVI…EQAA) and 120–154 (QKEK…ESDK). A compositionally biased stretch (low complexity) spans 155-172 (PSASAKKPAKKVPAGLAA). Composition is skewed to basic and acidic residues over residues 184–252 (EEQE…ERRR) and 267–276 (AKKDGEENKP). The segment covering 277–287 (KKVVYSKKKKR) has biased composition (basic residues). Residues 297 to 306 (IKSDSKKDSE) show a composition bias toward basic and acidic residues. 2 stretches are compositionally biased toward acidic residues: residues 307–342 (VVPD…EETQ) and 352–370 (DQNQ…EEEE). Residues 381 to 398 (STPAATPAATPTPSSASP) show a composition bias toward low complexity. The tr-type G domain maps to 403 to 621 (LRSPICCILG…LLELTQKRMS (219 aa)). Ser405 is subject to Phosphoserine. Residues 412-419 (GHVDTGKT) are G1. Residue Asp415 coordinates K(+). Asp415 contributes to the Na(+) binding site. Residues 415-420 (DTGKTK), Gln431, and 437-439 (GIT) contribute to the GTP site. Position 419 (Thr419) interacts with Mg(2+). Gly437 serves as a coordination point for K(+). Gly437 contacts Na(+). The tract at residues 437–441 (GITQQ) is G2. Thr439 lines the Mg(2+) pocket. A G3 region spans residues 476–479 (DTPG). GTP contacts are provided by residues 530–533 (NKID) and 599–600 (AV). Residues 530-533 (NKID) form a G4 region. A G5 region spans residues 598–600 (SAV).

Belongs to the TRAFAC class translation factor GTPase superfamily. Classic translation factor GTPase family. IF-2 subfamily. Na(+) is required as a cofactor. Requires K(+) as cofactor.

It is found in the cytoplasm. The catalysed reaction is GTP + H2O = GDP + phosphate + H(+). Functionally, plays a role in translation initiation. Translational GTPase that catalyzes the joining of the 40S and 60S subunits to form the 80S initiation complex with the initiator methionine-tRNA in the P-site base paired to the start codon. GTP binding and hydrolysis induces conformational changes in the enzyme that renders it active for productive interactions with the ribosome. The release of the enzyme after formation of the initiation complex is a prerequisite to form elongation-competent ribosomes. Stimulates 20S pre-rRNA cleavage to mature 18S rRNA by PIN-domain endonuclease NOB1. The protein is Eukaryotic translation initiation factor 5B of Saccharomyces cerevisiae (strain ATCC 204508 / S288c) (Baker's yeast).